Consider the following 110-residue polypeptide: Cytochrome c6 (110 aa).

The N-terminal stretch at 1-25 (MKKLVSSVILALILFGFSWVSPAFA) is a signal peptide. 4 residues coordinate heme c: cysteine 39, cysteine 42, histidine 43, and methionine 83.

The protein belongs to the cytochrome c family. PetJ subfamily. Monomer. In terms of processing, binds 1 heme c group covalently per subunit.

Its subcellular location is the cellular thylakoid lumen. Functions as an electron carrier between membrane-bound cytochrome b6-f and photosystem I in oxygenic photosynthesis. This Gloeothece citriformis (strain PCC 7424) (Cyanothece sp. (strain PCC 7424)) protein is Cytochrome c6.